Here is a 329-residue protein sequence, read N- to C-terminus: RNA-binding protein CP33, chloroplastic (329 aa).

A chloroplast-targeting transit peptide spans 1 to 69 (MSSAYCSSAV…NIRRHRFFCA (69 aa)). Positions 77 to 104 (ADDEIQASVEEEEEVEEEGDEGEEEVEE) are enriched in acidic residues. 2 disordered regions span residues 77–117 (ADDE…EEGR) and 296–329 (SEREKPTVSPPSVEEGETEEASLESNEVLSNVSA). RRM domains are found at residues 116–194 (GRLY…FPEV) and 219–297 (HKVY…LASE).

Its subcellular location is the plastid. It localises to the chloroplast. Could be involved in splicing and/or processing of chloroplast RNAs. The sequence is that of RNA-binding protein CP33, chloroplastic from Arabidopsis thaliana (Mouse-ear cress).